A 277-amino-acid chain; its full sequence is Carbonyl reductase [NADPH] 1 (277 aa).

At Ser-2 the chain carries N-acetylserine. Residues Ser-2 and Ser-30 each carry the phosphoserine modification. NADP(+) is bound by residues 10–34 (VTGG…GDVV), 63–64 (DI), and Asn-90. Residues 95-97 (FKV) and Gln-106 contribute to the glutathione site. Ser-140 provides a ligand contact to substrate. 193–194 (AY) contacts glutathione. The active-site Proton acceptor is the Tyr-194. NADP(+) is bound by residues 194–198 (YGVTK) and 231–233 (VRT). An N6-1-carboxyethyl lysine modification is found at Lys-239.

The protein belongs to the short-chain dehydrogenases/reductases (SDR) family. In terms of assembly, monomer.

It is found in the cytoplasm. It catalyses the reaction a secondary alcohol + NADP(+) = a ketone + NADPH + H(+). It carries out the reaction prostaglandin F2alpha + NADP(+) = prostaglandin E2 + NADPH + H(+). The catalysed reaction is prostaglandin E1 + NADP(+) = 15-oxoprostaglandin E1 + NADPH + H(+). The enzyme catalyses menadione + NADPH + H(+) = menadiol + NADP(+). It catalyses the reaction prostaglandin D2 + NADP(+) = 15-oxoprostaglandin D2 + NADPH + H(+). It carries out the reaction prostaglandin E2 + NADP(+) = 15-oxoprostaglandin E2 + NADPH + H(+). The catalysed reaction is prostaglandin F2alpha + NADP(+) = 15-oxoprostaglandin F2alpha + NADPH + H(+). The enzyme catalyses daunorubicin + NADPH + H(+) = 13-dihydrodaunorubicin + NADP(+). It catalyses the reaction S-nitrosoglutathione + NADPH + H(+) = S-(hydroxysulfenamide)glutathione + NADP(+). It carries out the reaction a primary alcohol + NADP(+) = an aldehyde + NADPH + H(+). The catalysed reaction is cortisol + NADPH + H(+) = 20beta-dihydrocortisol + NADP(+). The enzyme catalyses corticosterone + NADPH + H(+) = 20beta-dihydrocorticosterone + NADP(+). In terms of biological role, NADPH-dependent reductase with broad substrate specificity. Catalyzes the reduction of a wide variety of carbonyl compounds including quinones, prostaglandins, menadione, plus various xenobiotics. Catalyzes the reduction of the antitumor anthracyclines doxorubicin and daunorubicin to the cardiotoxic compounds doxorubicinol and daunorubicinol. Can convert prostaglandin E to prostaglandin F2-alpha. Can bind glutathione, which explains its higher affinity for glutathione-conjugated substrates. Catalyzes the reduction of S-nitrosoglutathione. In addition, participates in the glucocorticoid metabolism by catalyzing the NADPH-dependent cortisol/corticosterone into 20beta-dihydrocortisol (20b-DHF) or 20beta-corticosterone (20b-DHB), which are weak agonists of NR3C1 and NR3C2 in adipose tissue. The polypeptide is Carbonyl reductase [NADPH] 1 (Pongo abelii (Sumatran orangutan)).